The following is a 317-amino-acid chain: Malate dehydrogenase (317 aa).

Residues 7–13 (GAAGGIG) and Asp-34 contribute to the NAD(+) site. Residues Arg-81 and Arg-87 each coordinate substrate. NAD(+) is bound by residues Asn-94 and 117-119 (VTN). Residues Asn-119 and Arg-153 each contribute to the substrate site. His-177 (proton acceptor) is an active-site residue. Residue Met-231 participates in NAD(+) binding.

The protein belongs to the LDH/MDH superfamily. MDH type 1 family. Homodimer.

It catalyses the reaction (S)-malate + NAD(+) = oxaloacetate + NADH + H(+). Functionally, catalyzes the reversible oxidation of malate to oxaloacetate. The protein is Malate dehydrogenase of Actinobacillus pleuropneumoniae serotype 7 (strain AP76).